We begin with the raw amino-acid sequence, 722 residues long: MEQQKEITKGGFTLPGEAGFEKLTLELANRWGADVIRDSDGTELSDDILNAGYGIYSTICLIRDHNAWAKANIDKLQQTFLVTSPVVANSETLTIDLMEGFFKEQFLVNDSEEALEYWQVYDRTTETLLQKESWSYHPQNQTVVLTGICPWHKYTVSFMAYRIWEEISMYNHTTNNWNKEHLMQIDPIHKETQEYLLTWMDDWCKKHEQTTVVRFTSMFYNFVWMWGSNEKNRYLFSDWASYDFTVSPHALKLFEEEYGYVLTAEDFIHQGKFHVTHMPADKHKLDWMEFINNFVVDFGKKLIDIVHNYGKLAYVFYDDSWVGVEPYHKNFEKFGFDGLIKCVFSGFEVRLCAGVKVNTHELRLHPYLFPVGLGGAPTFMEGGNPTLDAKNYWISVRRALLREPIDRIGLGGYLHLVEDFPDFTDYIEKIANEFRRIKELHNAGKPMALKPRIAVLHSWGSLRSWTLSGHFHETYMHDLIHINESLSGLPFDVKFINFEDINQGALEEVDVVINAGIMGSAWTGGQAWEDQEIIERLTRFVYEGKAFIGVNEPSALTGYDTLYRMAHVLGVDMDLGDRVSHGRYSFTEEPVEELEFAECGPKAKRNIYLTDGLAKVLKEENGIPVMTSYEFGRGRGIYLASYEHSIKNARTLLNIILYAAGESFHQEGITNNVYTECAYYEKDKILVMINNSNTLQESSVTIKGRTYTKDIPAFDTVILPLE.

D319 acts as the Proton donor in catalysis.

This sequence belongs to the glycoside hydrolase 112 family.

The catalysed reaction is beta-D-galactosyl-(1-&gt;4)-L-rhamnose + phosphate = alpha-D-galactose 1-phosphate + L-rhamnopyranose. Functionally, reversibly phosphorolyzes beta-D-galactosyl-(1-&gt;4)-L-rhamnose to form alpha-D-galactose 1-phosphate and L-rhamnose. Does not phosphorolyze galacto-N-biose or lacto-N-biose. In the reverse reaction, has the highest activity toward L-rhamnose, also has activity toward L-mannose, and low activity toward L-lyxose, D-glucose, 2-deoxy-D-glucose and D-galactose. The polypeptide is D-galactosyl-beta-1-&gt;4-L-rhamnose phosphorylase (Lachnoclostridium phytofermentans (strain ATCC 700394 / DSM 18823 / ISDg) (Clostridium phytofermentans)).